A 391-amino-acid chain; its full sequence is Phosphoglycerate kinase (391 aa).

Substrate contacts are provided by residues 21–23, arginine 36, 59–62, arginine 113, and arginine 146; these read DLN and HLGR. ATP-binding positions include lysine 197, glutamate 319, and 345–348; that span reads GGDT.

It belongs to the phosphoglycerate kinase family. Monomer.

It is found in the cytoplasm. It carries out the reaction (2R)-3-phosphoglycerate + ATP = (2R)-3-phospho-glyceroyl phosphate + ADP. The protein operates within carbohydrate degradation; glycolysis; pyruvate from D-glyceraldehyde 3-phosphate: step 2/5. The sequence is that of Phosphoglycerate kinase from Stenotrophomonas maltophilia (strain K279a).